We begin with the raw amino-acid sequence, 573 residues long: Proline--tRNA ligase (573 aa).

Belongs to the class-II aminoacyl-tRNA synthetase family. ProS type 1 subfamily. In terms of assembly, homodimer.

It localises to the cytoplasm. The enzyme catalyses tRNA(Pro) + L-proline + ATP = L-prolyl-tRNA(Pro) + AMP + diphosphate. Functionally, catalyzes the attachment of proline to tRNA(Pro) in a two-step reaction: proline is first activated by ATP to form Pro-AMP and then transferred to the acceptor end of tRNA(Pro). As ProRS can inadvertently accommodate and process non-cognate amino acids such as alanine and cysteine, to avoid such errors it has two additional distinct editing activities against alanine. One activity is designated as 'pretransfer' editing and involves the tRNA(Pro)-independent hydrolysis of activated Ala-AMP. The other activity is designated 'posttransfer' editing and involves deacylation of mischarged Ala-tRNA(Pro). The misacylated Cys-tRNA(Pro) is not edited by ProRS. The polypeptide is Proline--tRNA ligase (Chromohalobacter salexigens (strain ATCC BAA-138 / DSM 3043 / CIP 106854 / NCIMB 13768 / 1H11)).